Consider the following 232-residue polypeptide: ATP-dependent dethiobiotin synthetase BioD (232 aa).

16–21 (GVGKTV) lines the ATP pocket. Residue Thr-20 participates in Mg(2+) binding. Residue Lys-41 is part of the active site. A substrate-binding site is contributed by Thr-45. ATP-binding positions include Asp-52, 111–114 (EGIG), 171–172 (NQ), 200–202 (PLS), and Glu-207. Mg(2+)-binding residues include Asp-52 and Glu-111.

This sequence belongs to the dethiobiotin synthetase family. In terms of assembly, homodimer. Requires Mg(2+) as cofactor.

The protein localises to the cytoplasm. It carries out the reaction (7R,8S)-7,8-diammoniononanoate + CO2 + ATP = (4R,5S)-dethiobiotin + ADP + phosphate + 3 H(+). The enzyme catalyses (7R,8S)-8-amino-7-(carboxyamino)nonanoate + ATP = (4R,5S)-dethiobiotin + ADP + phosphate + H(+). The protein operates within cofactor biosynthesis; biotin biosynthesis; biotin from 7,8-diaminononanoate: step 1/2. Functionally, catalyzes a mechanistically unusual reaction, the ATP-dependent insertion of CO2 between the N7 and N8 nitrogen atoms of 7,8-diaminopelargonic acid (DAPA, also called 7,8-diammoniononanoate) to form a ureido ring. This archaea does not encode bioA (which catalyzes the formation of the precursor for this reaction in the cannonical pathway), instead it encodes bioU, which replaces bioA and also performs the first half of the cannonical BioD reaction. Thus in this archaea BioD has a different substrate. This chain is ATP-dependent dethiobiotin synthetase BioD, found in Haloferax mediterranei (strain ATCC 33500 / DSM 1411 / JCM 8866 / NBRC 14739 / NCIMB 2177 / R-4) (Halobacterium mediterranei).